The primary structure comprises 315 residues: GTP cyclohydrolase MptA (315 aa).

Belongs to the GTP cyclohydrolase IV family. As to quaternary structure, homodimer. Requires Fe(2+) as cofactor.

It catalyses the reaction GTP + H2O = 7,8-dihydroneopterin 2',3'-cyclic phosphate + formate + diphosphate + H(+). Its pathway is cofactor biosynthesis; 5,6,7,8-tetrahydromethanopterin biosynthesis. Converts GTP to 7,8-dihydro-D-neopterin 2',3'-cyclic phosphate, the first intermediate in the biosynthesis of coenzyme methanopterin. The polypeptide is GTP cyclohydrolase MptA (Methanococcus maripaludis (strain C7 / ATCC BAA-1331)).